Here is a 141-residue protein sequence, read N- to C-terminus: uncharacterized protein (141 aa).

This is an uncharacterized protein from Caenorhabditis elegans.